The chain runs to 338 residues: Ferrochelatase (338 aa).

Fe cation is bound by residues His189 and Glu294.

Belongs to the ferrochelatase family.

Its subcellular location is the cytoplasm. It carries out the reaction heme b + 2 H(+) = protoporphyrin IX + Fe(2+). It participates in porphyrin-containing compound metabolism; protoheme biosynthesis; protoheme from protoporphyrin-IX: step 1/1. Functionally, catalyzes the ferrous insertion into protoporphyrin IX. In Pseudomonas putida (strain ATCC 47054 / DSM 6125 / CFBP 8728 / NCIMB 11950 / KT2440), this protein is Ferrochelatase.